Consider the following 507-residue polypeptide: Cytochrome P450 monooxygenase helB3 (507 aa).

A signal peptide spans Met-1–Ala-25. Asn-111, Asn-206, and Asn-339 each carry an N-linked (GlcNAc...) asparagine glycan. A heme-binding site is contributed by Cys-435.

Belongs to the cytochrome P450 family. Requires heme as cofactor.

It functions in the pathway mycotoxin biosynthesis. In terms of biological role, cytochrome P450 monooxygenase; part of the gene cluster that mediates the biosynthesis of helvolic acid, an antibacterial nortriterpenoid. Protostadienol synthase helA cyclizes (3S)-oxidosqualene to (17Z)-protosta-17(20),24-dien-3-beta-ol (protostadienol). The synthesis of protostadienol is followed by several steps of monooxygenation, dehydrogenation, and acyl transfer to yield the final helvolic acid. Following the cyclization to the tetracyclic protostadienol by helA, cytochrome P450 monooxygenases helB1-mediated and helB2-mediated oxidation at C-4 and C-16, acyltransferase helD2-dependent acetylation of 16-OH, oxidation of C-21 by cytochrome P450 monooxygenase helB4, and short chain dehydrogenase helC-dependent oxidative decarboxylation yield the fusidane skeleton. This intermediate is further modified in three additional steps mediated by the cytochrome P450 monooxygenase helB3, the acyltransferase helD1, and the 3-ketosteroid 1-dehydrogenase helE to give helvolic acid. Compared with the late stages in the biosynthesis of helvolic acid, enzymes involved in the early stage modifications act in a relatively strict order. The hydroxylation of C-16 by helB1 and subsequent acetylation by helD2 should occur before the helB3-mediated oxidation of C-21. C-4 demethylation in fusidane-type antibiotics proceeds in an unusual manner though it is also achieved by oxidative decarboxylation. The methyl group at C-4 beta position is oxidized by helB1 and subsequently removed by the short chain dehydrogenase helC. This chain is Cytochrome P450 monooxygenase helB3, found in Aspergillus fumigatus (strain ATCC MYA-4609 / CBS 101355 / FGSC A1100 / Af293) (Neosartorya fumigata).